The chain runs to 874 residues: Collagen alpha-2(I) chain (874 aa).

Positions serine 1–alanine 874 are disordered. Residues proline 10 and proline 13 each carry the 4-hydroxyproline modification. Lysine 16 carries the allysine modification. The segment covering leucine 27–proline 66 has biased composition (low complexity). A 4-hydroxyproline mark is found at proline 34 and proline 40. 5-hydroxylysine; alternate is present on lysine 93. A glycan (O-linked (Gal...) hydroxylysine; alternate) is linked at lysine 93. Composition is skewed to low complexity over residues alanine 110–proline 143, proline 188–proline 209, and proline 218–lysine 236. The segment covering glycine 237 to glycine 246 has biased composition (gly residues). A compositionally biased stretch (low complexity) spans serine 247–serine 257. Residues proline 317 and proline 320 each carry the 4-hydroxyproline modification. Composition is skewed to low complexity over residues leucine 346–alanine 365, proline 434–proline 451, and glutamate 463–alanine 473. Positions glycine 474–glycine 483 are enriched in gly residues. Low complexity-rich tracts occupy residues arginine 491–serine 538 and valine 545–alanine 565. Residues lysine 566–lysine 575 show a composition bias toward basic and acidic residues. Positions proline 583–alanine 593 are enriched in low complexity. Gly residues predominate over residues glycine 603–glycine 612. Positions threonine 614–threonine 623 are enriched in low complexity. Over residues glycine 648–glycine 662 the composition is skewed to gly residues. Low complexity-rich tracts occupy residues phenylalanine 663–proline 697 and leucine 705–proline 724. The segment covering glycine 725–glycine 744 has biased composition (gly residues). Low complexity-rich tracts occupy residues alanine 745–alanine 755 and glutamate 763–proline 778.

This sequence belongs to the fibrillar collagen family. Trimers of one alpha 2(I) and two alpha 1(I) chains. Interacts (via C-terminus) with TMEM131 (via PapD-L domain); the interaction is direct and is involved in assembly and TRAPPIII ER-to-Golgi transport complex-dependent secretion of collagen. Post-translationally, prolines at the third position of the tripeptide repeating unit (G-X-Y) are hydroxylated in some or all of the chains. Expressed in bones.

It localises to the secreted. The protein resides in the extracellular space. Its subcellular location is the extracellular matrix. Functionally, type I collagen is a member of group I collagen (fibrillar forming collagen). This chain is Collagen alpha-2(I) chain, found in Megalonyx jeffersonii (Jefferson's ground sloth).